A 491-amino-acid chain; its full sequence is Ketol-acid reductoisomerase (NADP(+)) (491 aa).

The region spanning 15–208 (AQLGKCRFMG…GGHRAGVLES (194 aa)) is the KARI N-terminal Rossmann domain. Residues 45–48 (CGAQ), R68, R76, S78, and 108–110 (DKQ) contribute to the NADP(+) site. H132 is an active-site residue. G158 serves as a coordination point for NADP(+). 2 KARI C-terminal knotted domains span residues 209–344 (SFVA…TAPQ) and 345–484 (YEGK…MTDM). The Mg(2+) site is built by D217, E221, E389, and E393. S414 is a substrate binding site.

It belongs to the ketol-acid reductoisomerase family. Requires Mg(2+) as cofactor.

The catalysed reaction is (2R)-2,3-dihydroxy-3-methylbutanoate + NADP(+) = (2S)-2-acetolactate + NADPH + H(+). It carries out the reaction (2R,3R)-2,3-dihydroxy-3-methylpentanoate + NADP(+) = (S)-2-ethyl-2-hydroxy-3-oxobutanoate + NADPH + H(+). It functions in the pathway amino-acid biosynthesis; L-isoleucine biosynthesis; L-isoleucine from 2-oxobutanoate: step 2/4. It participates in amino-acid biosynthesis; L-valine biosynthesis; L-valine from pyruvate: step 2/4. Functionally, involved in the biosynthesis of branched-chain amino acids (BCAA). Catalyzes an alkyl-migration followed by a ketol-acid reduction of (S)-2-acetolactate (S2AL) to yield (R)-2,3-dihydroxy-isovalerate. In the isomerase reaction, S2AL is rearranged via a Mg-dependent methyl migration to produce 3-hydroxy-3-methyl-2-ketobutyrate (HMKB). In the reductase reaction, this 2-ketoacid undergoes a metal-dependent reduction by NADPH to yield (R)-2,3-dihydroxy-isovalerate. This is Ketol-acid reductoisomerase (NADP(+)) from Escherichia coli O7:K1 (strain IAI39 / ExPEC).